A 306-amino-acid polypeptide reads, in one-letter code: UDP-N-acetylenolpyruvoylglucosamine reductase (306 aa).

The region spanning 33 to 197 (TGGEADFYLS…LEAAFTLEPG (165 aa)) is the FAD-binding PCMH-type domain. Arginine 176 is a catalytic residue. Catalysis depends on serine 226, which acts as the Proton donor. The active site involves glutamate 296.

This sequence belongs to the MurB family. It depends on FAD as a cofactor.

It localises to the cytoplasm. The catalysed reaction is UDP-N-acetyl-alpha-D-muramate + NADP(+) = UDP-N-acetyl-3-O-(1-carboxyvinyl)-alpha-D-glucosamine + NADPH + H(+). The protein operates within cell wall biogenesis; peptidoglycan biosynthesis. In terms of biological role, cell wall formation. The sequence is that of UDP-N-acetylenolpyruvoylglucosamine reductase from Staphylococcus epidermidis (strain ATCC 35984 / DSM 28319 / BCRC 17069 / CCUG 31568 / BM 3577 / RP62A).